We begin with the raw amino-acid sequence, 421 residues long: MTESVLDYMTRLGRAARQASRVIARATTAQKNRALLAAADALDAARPELTAANEQDLANGRANGLEPALLDRLALTPARIDEMIEGLRQVAKLPDPIGEIRDMRYLPSGIQVGKMRVPLGVIGIIYESRPNVTIDAASLCLKSGNATILRGGSEAIHSNRAIATCIQQGLAAADLPPHVVQVVETTDRAAVGALITMPEFVDVIVPRGGKSLIERVSRDAKVPVIKHLDGVCHVYIDVAADLDKAIRIADNAKTQRYAPCNTMETLLVHSAIAERVLPPLAAIYRDKGVELRGCAQTRALLGAGVLEATEEDWRTEYTAPILSIRVLDNLEQAIEHINTYGSHHTDSIVTENFSDARRFLNEVDSSSVMVNASTRFADGFEYGLGAEIGISTDKLHARGPVGLEGLTSEKYVVFGDGHVRT.

It belongs to the gamma-glutamyl phosphate reductase family.

The protein resides in the cytoplasm. It carries out the reaction L-glutamate 5-semialdehyde + phosphate + NADP(+) = L-glutamyl 5-phosphate + NADPH + H(+). It functions in the pathway amino-acid biosynthesis; L-proline biosynthesis; L-glutamate 5-semialdehyde from L-glutamate: step 2/2. Catalyzes the NADPH-dependent reduction of L-glutamate 5-phosphate into L-glutamate 5-semialdehyde and phosphate. The product spontaneously undergoes cyclization to form 1-pyrroline-5-carboxylate. The chain is Gamma-glutamyl phosphate reductase from Pseudomonas fluorescens (strain ATCC BAA-477 / NRRL B-23932 / Pf-5).